The following is a 529-amino-acid chain: Bifunctional purine biosynthesis protein PurH (529 aa).

The 148-residue stretch at 1–148 (MQQRRPIRRA…KNHKDVAIVV (148 aa)) folds into the MGS-like domain.

Belongs to the PurH family.

It carries out the reaction (6R)-10-formyltetrahydrofolate + 5-amino-1-(5-phospho-beta-D-ribosyl)imidazole-4-carboxamide = 5-formamido-1-(5-phospho-D-ribosyl)imidazole-4-carboxamide + (6S)-5,6,7,8-tetrahydrofolate. The enzyme catalyses IMP + H2O = 5-formamido-1-(5-phospho-D-ribosyl)imidazole-4-carboxamide. The protein operates within purine metabolism; IMP biosynthesis via de novo pathway; 5-formamido-1-(5-phospho-D-ribosyl)imidazole-4-carboxamide from 5-amino-1-(5-phospho-D-ribosyl)imidazole-4-carboxamide (10-formyl THF route): step 1/1. It participates in purine metabolism; IMP biosynthesis via de novo pathway; IMP from 5-formamido-1-(5-phospho-D-ribosyl)imidazole-4-carboxamide: step 1/1. This is Bifunctional purine biosynthesis protein PurH from Pectobacterium carotovorum subsp. carotovorum (strain PC1).